We begin with the raw amino-acid sequence, 118 residues long: Transcriptional regulator WhiB4 (118 aa).

The region spanning L36–A92 is the 4Fe-4S Wbl-type domain. Residues C37, C59, C62, and C68 each contribute to the [4Fe-4S] cluster site. Intrachain disulfides connect C37/C68 and C59/C62.

Belongs to the WhiB family. The cofactor is [4Fe-4S] cluster. The Fe-S cluster can be nitrosylated by nitric oxide (NO). Post-translationally, upon Fe-S cluster removal intramolecular disulfide bonds are formed.

It is found in the cytoplasm. Functionally, acts as a transcriptional regulator. Probably redox-responsive. The apo- but not holo-form probably binds DNA. In Mycobacterium tuberculosis (strain CDC 1551 / Oshkosh), this protein is Transcriptional regulator WhiB4 (whiB4).